The chain runs to 473 residues: Cysteine--tRNA ligase (473 aa).

Position 28 (Cys28) interacts with Zn(2+). Positions 30 to 40 (PTVYNMPHIGN) match the 'HIGH' region motif. 3 residues coordinate Zn(2+): Cys213, His238, and Glu242. A 'KMSKS' region motif is present at residues 270 to 274 (KMSKS). Lys273 serves as a coordination point for ATP.

Belongs to the class-I aminoacyl-tRNA synthetase family. It depends on Zn(2+) as a cofactor.

It localises to the cytoplasm. It carries out the reaction tRNA(Cys) + L-cysteine + ATP = L-cysteinyl-tRNA(Cys) + AMP + diphosphate. The polypeptide is Cysteine--tRNA ligase (Methanosarcina acetivorans (strain ATCC 35395 / DSM 2834 / JCM 12185 / C2A)).